The following is a 970-amino-acid chain: Sodium/calcium exchanger 1 (970 aa).

The signal sequence occupies residues 1-32 (MLQLRLLPTFSMGCHLLAVVALLFSHVDLISA). Residues 33–71 (ETEMEGEGNETGECTGSYYCKKGVILPIWEPQDPSFGDK) are Extracellular-facing. N-linked (GlcNAc...) asparagine glycosylation occurs at N41. A helical transmembrane segment spans residues 72 to 92 (IARATVYFVAMVYMFLGVSII). Topologically, residues 93-133 (ADRFMSSIEVITSQEKEITIKKPNGETTKTTVRIWNETVSN) are cytoplasmic. Residues 134 to 154 (LTLMALGSSAPEILLSVIEVC) traverse the membrane as a helical segment. The stretch at 138–178 (ALGSSAPEILLSVIEVCGHNFTAGDLGPSTIVGSAAFNMFI) is one Alpha-1 repeat. Residues 155 to 167 (GHNFTAGDLGPST) lie on the Extracellular side of the membrane. The N-linked (GlcNAc...) asparagine glycan is linked to N157. The helical transmembrane segment at 168–188 (IVGSAAFNMFIIIALCVYVVP) threads the bilayer. At 189 to 201 (DGETRKIKHLRVF) the chain is on the cytoplasmic side. Residues 202–222 (FVTAAWSIFAYTWLYIILSVI) traverse the membrane as a helical segment. The Extracellular portion of the chain corresponds to 223–228 (SPGVVE). A helical membrane pass occupies residues 229 to 249 (VWEGLLTFFFFPICVVFAWVA). Topologically, residues 250–797 (DRRLLFYKYV…FVPPTEYWNG (548 aa)) are cytoplasmic. Residues 251 to 270 (RRLLFYKYVYKRYRAGKQRG) form a putative calmodulin-binding region region. S282 and S389 each carry phosphoserine. 2 consecutive Calx-beta domains span residues 393 to 493 (VNTE…VHLS) and 524 to 624 (ATVT…LEIG). Residues E417, D453, D478, D479, I481, E483, E486, D530, D531, D532, E548, D584, D610, E611, E612, and E715 each coordinate Ca(2+). The chain crosses the membrane as a helical span at residues 798-818 (WACFIVSILMIGILTAFIGDL). Residues 819-821 (ASH) lie on the Extracellular side of the membrane. A helical membrane pass occupies residues 822 to 842 (FGCTIGLKDSVTAVVFVALGT). An Alpha-2 repeat occupies 839–875 (ALGTSVPDTFASKVAATQDQYADASIGNVTGSNAVNV). Over 843–871 (SVPDTFASKVAATQDQYADASIGNVTGSN) the chain is Cytoplasmic. The helical transmembrane segment at 872–892 (AVNVFLGIGVAWSIAAIYHAA) threads the bilayer. Residues 893–903 (NGEQFKVSPGT) are Extracellular-facing. A helical membrane pass occupies residues 904–924 (LAFSVTLFTIFAFINVGVLLY). At 925–941 (RRRPEIGGELGGPRTAK) the chain is on the cytoplasmic side. A helical transmembrane segment spans residues 942 to 962 (LLTSCLFVLLWLLYIFFSSLE). The Extracellular segment spans residues 963–970 (AYCHIKGF).

This sequence belongs to the Ca(2+):cation antiporter (CaCA) (TC 2.A.19) family. SLC8 subfamily. As to expression, cardiac sarcolemma (at protein level).

The protein resides in the cell membrane. It localises to the sarcolemma. The enzyme catalyses Ca(2+)(in) + 3 Na(+)(out) = Ca(2+)(out) + 3 Na(+)(in). With respect to regulation, activated by micromolar levels of Ca(2+). In the absence of regulatory Ca(2+), channels open rapidly, and then inactivate rapidly. Inactivation is enhanced by Na(+) and is inhibited by micromolar levels of Ca(2+). Its function is as follows. Mediates the exchange of one Ca(2+) ion against three to four Na(+) ions across the cell membrane, and thereby contributes to the regulation of cytoplasmic Ca(2+) levels and Ca(2+)-dependent cellular processes. Contributes to Ca(2+) transport during excitation-contraction coupling in muscle. In a first phase, voltage-gated channels mediate the rapid increase of cytoplasmic Ca(2+) levels due to release of Ca(2+) stores from the endoplasmic reticulum. SLC8A1 mediates the export of Ca(2+) from the cell during the next phase, so that cytoplasmic Ca(2+) levels rapidly return to baseline. Required for normal embryonic heart development and the onset of heart contractions. The sequence is that of Sodium/calcium exchanger 1 (SLC8A1) from Canis lupus familiaris (Dog).